Here is a 339-residue protein sequence, read N- to C-terminus: Probable G-protein coupled receptor 33 (339 aa).

Residues 1 to 30 (MDLINSSTHVINVSTSLTNSTGVPTPAPKT) are Extracellular-facing. Residues asparagine 5, asparagine 12, and asparagine 19 are each glycosylated (N-linked (GlcNAc...) asparagine). Residues 31–53 (IIAASLFMAFIIGVISNGLYLWM) traverse the membrane as a helical segment. At 54-64 (LQFKMQRTVNT) the chain is on the cytoplasmic side. A helical transmembrane segment spans residues 65–86 (LLFFHLILSYFISTLILPFMAT). Residues 87–103 (SFLQDNHWVFGSVLCKA) lie on the Extracellular side of the membrane. Cysteine 101 and cysteine 179 are joined by a disulfide. The chain crosses the membrane as a helical span at residues 104-124 (FNSTLSVSMFASVFFLSAISV). Residues 125–143 (ARYYLILHPVWSQQHRTPH) are Cytoplasmic-facing. A helical membrane pass occupies residues 144–165 (WASRIALQIWISATILSIPYLV). Topologically, residues 166–209 (FRTTHDDHKGRIKCQNNYIVSTDWESKEHQTLGQWIHAACFVGR) are extracellular. Residues 210-230 (FLLGFLLPFLVIIFCYKRVAT) traverse the membrane as a helical segment. Residues 231–246 (KMKEKGLFKSSKPFKV) are Cytoplasmic-facing. Residues 247–268 (MVTAVISFFVCWMPYHVHSGLV) traverse the membrane as a helical segment. Residues 269–283 (LTKSQPLPLHLTLGL) lie on the Extracellular side of the membrane. A helical membrane pass occupies residues 284 to 303 (AVVTISFNTVVSPVLYLFTG). Over 304 to 339 (ENFKVFKKSILALFNSTFSDISSTERTQTLNSETEI) the chain is Cytoplasmic.

It belongs to the G-protein coupled receptor 1 family. As to expression, expressed predominantly in lung, spleen and testis.

The protein resides in the cell membrane. In terms of biological role, orphan receptor; could be a chemoattractant receptor. The protein is Probable G-protein coupled receptor 33 (Gpr33) of Mus musculus (Mouse).